A 1292-amino-acid chain; its full sequence is MAIIKRGVRQKTQPPAKRTTNIKKATFDSGKKKEVGVSDLTLLSKISDEHINENLKRRFENGSIYTYIGHVLISVNPFRDLGIYTDQVLETYKGRNRLEVPPHVFAIAEAMYYNLKAYNENQCVIISGESGAGKTEAAKRIMQYIAAASSSHEASIGRIKDMVLATNPLLESFGCAKTLRNNNSSRHGKYLEIRFNAQFEPCAGQITNYLLEKQRVVGQIKNERNFHIFYQFSKGASDRYRKTYGVQLPEQYVYTSASGCTSVDTIDDLNDYEATLEAMNVIGLSQAEQDEIFRLLSAILWIGNVTFMEDDEGNAKIADTSITDFVAYLLQVDAGLLVKSLVERTIETTHGMRRGSIYNVPLNIVQATAVRDALAKAIYNNLFEWIVDRVNVSLQALPGAEKSIGILDIYGFEIFEHNSFEQICINYVNEKLQQIFIQLTLKSEQEEYAKEQIQWTPIKYFDNKVVCELIEAKRPPGIFAALNDSVATAHADSNAADQAFAQRLNLFTSNPHFELRSSKFVIKHYAGDVTYDIGGMTDKNKDQLQRDLVELLNSTSNTFLATIFPDTGDKDSKRRPPTAGDKIIRSANELVDTLSKAQPSYIRTIKPNQTKSPLDYDDRQVLHQVKYLGLQENVRIRRAGFAYRQTFEKFVERFYLLSPQCSYAGDYTWQGNTLDAVNLILRDTSIPVTEYQLGVTKVFIKTPETLFALENMRDKYWHNMASRIQRAWRRFLQRRIDSAIRIQRAIREMKHGNQFEQLRDYGNKLLGGRKERRAMSLLGYRAFLGDYLSCNELKSKGAFVKRKAGINDHVVFSINGQALHSKFGRSAQRLPKTFILTPSHFYIIGKTLVNNQLTYAVDYKIDVRQIVYVSLTNLQDDWVGIFVSNSTQPDPLINTYFKTELITHLKKLNNRIEIKIGPTIEYQKKPGKIHAVKSQINENAPPLGDIYKSSTIMVRRGRPGNCSQRKKPLSTRLPDTYTTRETGYKNAGHPTNIRQVQEPTHISHSQQHTSSNLGFVYSLNPSAVNHPRPVPSGSVGTTSTPPKQAASAAQAAYNPHKLGGNMDNSSAAYGNASALPNSAPSQAPKPASRPVPKPAPRPGPKPGPKPGPKPGPKPAPKPMPRPAKSVENSVPRPNAIEQGKTAPPPPPPPPPPPAAVPSEPVYEAAFDFPGSGSPNEFPLKKGDRIYVTRQEPSGWSLAKALDGSKEGWVPTAYIVESKAAFSQLEQPVASSAPLGNSGVATREAGTTSAATAAASAATPTAFSAGLADALAARANKMRHEDSGSDDNADDDW.

One can recognise a Myosin motor domain in the interval 35–714 (VGVSDLTLLS…TLFALENMRD (680 aa)). Residue 128–135 (GESGAGKT) coordinates ATP. At serine 356 the chain carries Phosphoserine. Residues 403–485 (SIGILDIYGF…PGIFAALNDS (83 aa)) form an actin-binding region. IQ domains lie at 718-738 (HNMA…RIDS) and 739-764 (AIRI…YGNK). A TH1 domain is found at 770–960 (KERRAMSLLG…TIMVRRGRPG (191 aa)). 3 disordered regions span residues 956–991 (RGRP…GHPT), 1017–1180 (YSLN…FPLK), and 1227–1258 (PVAS…SAAT). Residues 1062-1081 (MDNSSAAYGNASALPNSAPS) show a composition bias toward polar residues. Composition is skewed to pro residues over residues 1087–1121 (ASRP…PMPR) and 1142–1155 (APPP…PPAA). The 63-residue stretch at 1157–1219 (PSEPVYEAAF…PTAYIVESKA (63 aa)) folds into the SH3 domain. Residues 1240-1258 (ATREAGTTSAATAAASAAT) are compositionally biased toward low complexity.

Belongs to the TRAFAC class myosin-kinesin ATPase superfamily. Myosin family. Phosphorylation of the TEDS site (Ser-356) is required for the polarization of the actin cytoskeleton. Phosphorylation probably activates the myosin-I ATPase activity.

It is found in the cytoplasm. The protein resides in the cytoskeleton. Its subcellular location is the actin patch. Its function is as follows. Type-I myosin implicated in the organization of the actin cytoskeleton. Required for proper actin cytoskeleton polarization. At the cell cortex, assembles in patch-like structures together with proteins from the actin-polymerizing machinery and promotes actin assembly. Functions as actin nucleation-promoting factor (NPF) for the Arp2/3 complex. The polypeptide is Myosin-1 (MYO1) (Eremothecium gossypii (strain ATCC 10895 / CBS 109.51 / FGSC 9923 / NRRL Y-1056) (Yeast)).